The following is a 1159-amino-acid chain: MPRKQPAGCIFLLTFLGLSGLVGTVTRTYYIGIVEEYWNYVPQGKNVITGKSFTEDKLATLFLERGPNRIGSIYKKAVYRRFTDGTYSIEIPKPPWLGFLGPILRAEVGDVIVIHLKNFASRPYSLHPHGVFYNKDSEGALYPDGTSGRNKNDDMVPPGKNYTYVWPVREEYAPTPADANCLTWVYHSHIDAPKDICSGLIGPLLVCKEGILNRYSGTRNDVDREFVIMFTLVDENQSWYLNENIKHFCTNPDSVDKKDAVFQRSNKMHALNGYLFGNFPEPDMCVGESVSWHLFGMGNEIDIHSIYFYGNTFISRGHRTDVVNLFPATFLTTEMIAENPGKWMITCQVSDHLQAGMLGQYNVDNCKSDIFYPKMKGQQRRYFIAAEKILWDYAPQGYNKFSGLPLNASGSDSDLYFTQGDNRIGGKYWKVRYTEFVDATFTKRKRLSAEEAHLGILGPVIKAEVGDTLLVTFANKADKVYSILPHGVIYDKASDAAPNLDGFVKPGAHVKPGETFTYKWTVPESVSPTAGDPPCLTYLYFSAVDPIKDTSSGLVGPLLVCKKGVLNADGTQKGIDKEFYLLFTVFDENLSRYFDENIQKFIWHPFSIDKEDKEFVKSNRMHAVNGYMYGNQPGLNMCKRDRVSWHLIGLGTDTDMHGIVFQGNTIHLRGTHRDSLALFPHMATTAFMQPDHAGIFRVFCATMPHLSRGMGQIYEVSSCDNRDPSEQRYGMIRTFYIAAEEVEWDYAPNKNWEFEKQHVDARGERHGDIFMNRTENWIGSQYKKVVYREYTDGEFVEIKARPPREEHLELLGPMIHAEVGNTVLIIFKNKASRPYSISAQGVEEMDSGKQFQVPMTKPGEVKTYRWNIPKRSGPGPSDPNCIPWVYYSTVNFVKDTYSGLMGPLITCRKGVLNEKGRRSDVDYEFALLFLVFNENESWYLDDNIKKYLNKDPRDFKRTDDFEESNRMHAINGKIFGNLHGLIMNEDTMTNWYLLGIGSEVDIHTIHYHAESFLFKIDKSYREDVYDLFPGTFQTIELFADHPGTWLLHCHVSDHIHAGMETTYTVLRNIDNRIPYSTTSPGVASHPATVPSNERPGKEQLYFFGKNLGPTGAKAALVILFIIGLLLLITTVILSLRLCSAMKQTDYQQVQSCALPTDAL.

The first 24 residues, 1-24, serve as a signal peptide directing secretion; it reads MPRKQPAGCIFLLTFLGLSGLVGT. Plastocyanin-like domains lie at 25–207, 218–366, 379–561, 571–719, 731–907, and 915–1092; these read VTRT…LLVC, TRND…VDNC, QRRY…LLVC, TQKG…VSSC, MIRT…LITC, and KGRR…VPSN. Over 25 to 1114 the chain is Extracellular; the sequence is VTRTYYIGIV…KNLGPTGAKA (1090 aa). Residues H127 and H129 each contribute to the Cu cation site. N161 is a glycosylation site (N-linked (GlcNAc...) asparagine). An intrachain disulfide couples C181 to C207. Cu cation-binding residues include H187 and H189. The N-linked (GlcNAc...) asparagine glycan is linked to N236. A disulfide bond links C285 and C366. Residues H304, C347, and H352 each contribute to the Cu cation site. N407 carries an N-linked (GlcNAc...) asparagine glycan. C535 and C561 are oxidised to a cystine. N589 carries an N-linked (GlcNAc...) asparagine glycan. A disulfide bridge connects residues C638 and C719. Cu cation-binding residues include H657, C700, H705, and M710. A glycan (N-linked (GlcNAc...) asparagine) is linked at N772. C881 and C907 are disulfide-bonded. N-linked (GlcNAc...) asparagine glycosylation is present at N935. H1003, H1006, H1008, H1048, C1049, H1050, H1054, and M1059 together coordinate Cu cation. A helical transmembrane segment spans residues 1115 to 1135; that stretch reads ALVILFIIGLLLLITTVILSL. Topologically, residues 1136 to 1159 are cytoplasmic; that stretch reads RLCSAMKQTDYQQVQSCALPTDAL.

It belongs to the multicopper oxidase family. Cu cation is required as a cofactor.

The protein resides in the membrane. It catalyses the reaction 4 Fe(2+) + O2 + 4 H(+) = 4 Fe(3+) + 2 H2O. Functionally, is a copper-binding glycoprotein with ferroxidase activity. It oxidizes Fe(2+) to Fe(3+) without releasing radical oxygen species. May be involved in the regulation of intracellular iron content. This chain is Ferroxidase HEPHL1 (HEPHL1), found in Homo sapiens (Human).